Here is a 1409-residue protein sequence, read N- to C-terminus: Mediator of RNA polymerase II transcription subunit 23 (1409 aa).

The interval 1359–1409 (ASAAGQGPAQGGPQSQQPQTTGQAGGQPSVPQQQQQTQQQQPQQQQQVQQQ) is disordered.

This sequence belongs to the Mediator complex subunit 23 family. Component of the Mediator complex.

Its subcellular location is the nucleus. Its function is as follows. Component of the Mediator complex, a coactivator involved in the regulated transcription of nearly all RNA polymerase II-dependent genes. Mediator functions as a bridge to convey information from gene-specific regulatory proteins to the basal RNA polymerase II transcription machinery. Mediator is recruited to promoters by direct interactions with regulatory proteins and serves as a scaffold for the assembly of a functional preinitiation complex with RNA polymerase II and the general transcription factors. The polypeptide is Mediator of RNA polymerase II transcription subunit 23 (MED23) (Aedes aegypti (Yellowfever mosquito)).